A 601-amino-acid polypeptide reads, in one-letter code: Secretogranin-2 (601 aa).

The first 30 residues, 1–30 (MSSQRNYCLAGCLSSCILVILMSFSDAASF), serve as a signal peptide directing secretion. The tract at residues 89-109 (EQKDTQALSTDTAKSPTSDDE) is disordered. Positions 93-104 (TQALSTDTAKSP) are enriched in polar residues. Position 151 is a sulfotyrosine (Y151). Positions 258-273 (VESQTQEELKESKEEV) are enriched in basic and acidic residues. The segment at 258–307 (VESQTQEELKESKEEVEKTDDMEDEIKRSGLLGLQDEEPEKDTKEQESEN) is disordered.

The protein belongs to the chromogranin/secretogranin protein family.

The protein localises to the secreted. Neuroendocrine protein of the granin family that regulates the biogenesis of secretory granules. This is Secretogranin-2 from Pelophylax ridibundus (Marsh frog).